A 519-amino-acid polypeptide reads, in one-letter code: Cytochrome P450 88A1 (519 aa).

Residues 1-21 traverse the membrane as a helical segment; the sequence is MLGVGMAAAVLLGAVALLLAD. Cysteine 466 provides a ligand contact to heme.

Belongs to the cytochrome P450 family. Heme is required as a cofactor. As to expression, expressed in roots, developing leaves, the vegetative meristem, and suspension culture cells.

The protein localises to the membrane. It participates in plant hormone biosynthesis; gibberellin biosynthesis. The sequence is that of Cytochrome P450 88A1 (CYP88A1) from Zea mays (Maize).